The following is a 384-amino-acid chain: Actin-related protein 2/3 complex subunit 1 (384 aa).

5 WD repeats span residues 61–99, 105–146, 151–190, 212–251, and 349–383; these read DHDK…TYKP, RINR…WVSK, PIKS…LDSK, YQGS…QSVN, and AHEN…VIYT.

The protein belongs to the WD repeat ARPC1 family. As to quaternary structure, component of the Arp2/3 complex composed of ARP2, ARP3, ARC40/p41-ARC, ARC35/p34-ARC, ARC18/p21-ARC, ARC19/p20-ARC and ARC16/p16-ARC.

It localises to the cytoplasm. The protein localises to the cytoskeleton. The protein resides in the actin patch. Functions as a component of the Arp2/3 complex which is involved in regulation of actin polymerization and together with an activating nucleation-promoting factor (NPF) mediates the formation of branched actin networks. This Saccharomyces cerevisiae (strain ATCC 204508 / S288c) (Baker's yeast) protein is Actin-related protein 2/3 complex subunit 1 (ARC40).